Consider the following 198-residue polypeptide: Pre-histone-like nucleoprotein (198 aa).

N-acetylserine; by host is present on S2. A propeptide spanning residues S2 to G24 is cleaved from the precursor. The disordered stretch occupies residues G24–T55. Residues K27 and K48 each carry the N6-acetyllysine; by host modification. A compositionally biased stretch (basic residues) spans V34–T52. T55 and T74 each carry phosphothreonine; by host. A phosphoserine; by host mark is found at S183 and S185. The Nuclear localization signal motif lies at R188–N198.

It belongs to the adenoviridae histone-like nucleoprotein family. As to quaternary structure, interacts with the core-capsid bridging protein; this interaction bridges the virus core to the capsid. Interacts with host NPM1; this interaction might play a role in placing the pre-histone-like nucleoprotein on the viral DNA or regulating viral gene expression. Interacts with host HMGB1; this interaction inhibits host immune response. Post-translationally, cleaved near the N-terminus by the viral protease during virion maturation to form the mature protein.

Its subcellular location is the virion. The protein localises to the host nucleus. It is found in the host nucleolus. Its function is as follows. Plays a role in the inhibition of host immune response within the nucleus. Interacts with cellular nucleosomes and immobilizes the host immune danger signal HMGB1 on chromatin. In turn, prevents HMGB1 release out of the cell and thus decreases inflammation. Also plays a role in the wrapping and condensation of the viral DNA. May also promote viral genome import into the nucleus. In Human adenovirus C serotype 2 (HAdV-2), this protein is Pre-histone-like nucleoprotein.